Here is a 214-residue protein sequence, read N- to C-terminus: Phosphatidylserine decarboxylase proenzyme (214 aa).

S183 serves as the catalytic Schiff-base intermediate with substrate; via pyruvic acid. Position 183 is a pyruvic acid (Ser); by autocatalysis (S183).

Belongs to the phosphatidylserine decarboxylase family. PSD-A subfamily. In terms of assembly, heterodimer of a large membrane-associated beta subunit and a small pyruvoyl-containing alpha subunit. It depends on pyruvate as a cofactor. In terms of processing, is synthesized initially as an inactive proenzyme. Formation of the active enzyme involves a self-maturation process in which the active site pyruvoyl group is generated from an internal serine residue via an autocatalytic post-translational modification. Two non-identical subunits are generated from the proenzyme in this reaction, and the pyruvate is formed at the N-terminus of the alpha chain, which is derived from the carboxyl end of the proenzyme. The post-translation cleavage follows an unusual pathway, termed non-hydrolytic serinolysis, in which the side chain hydroxyl group of the serine supplies its oxygen atom to form the C-terminus of the beta chain, while the remainder of the serine residue undergoes an oxidative deamination to produce ammonia and the pyruvoyl prosthetic group on the alpha chain.

The protein localises to the cell membrane. The enzyme catalyses a 1,2-diacyl-sn-glycero-3-phospho-L-serine + H(+) = a 1,2-diacyl-sn-glycero-3-phosphoethanolamine + CO2. Its pathway is phospholipid metabolism; phosphatidylethanolamine biosynthesis; phosphatidylethanolamine from CDP-diacylglycerol: step 2/2. Functionally, catalyzes the formation of phosphatidylethanolamine (PtdEtn) from phosphatidylserine (PtdSer). This is Phosphatidylserine decarboxylase proenzyme from Chlorobaculum parvum (strain DSM 263 / NCIMB 8327) (Chlorobium vibrioforme subsp. thiosulfatophilum).